The sequence spans 605 residues: Alpha-amylase (605 aa).

An N-terminal signal peptide occupies residues 1 to 33; the sequence is MGVRRSLAALLAALLGCATSLVALTVAASPAHA. Positions 130 and 189 each coordinate Ca(2+). Aspartate 219 (nucleophile) is an active-site residue. Histidine 223 is a binding site for Ca(2+). Residue glutamate 253 is the Proton donor of the active site. The 106-residue stretch at 500–605 folds into the CBM20 domain; the sequence is GDDCTTVTAR…CSQNFYDSWR (106 aa).

This sequence belongs to the glycosyl hydrolase 13 family. As to quaternary structure, monomer. It depends on Ca(2+) as a cofactor.

The enzyme catalyses Endohydrolysis of (1-&gt;4)-alpha-D-glucosidic linkages in polysaccharides containing three or more (1-&gt;4)-alpha-linked D-glucose units.. In Thermomonospora curvata, this protein is Alpha-amylase (tam).